The chain runs to 696 residues: Elongation factor G (696 aa).

In terms of domain architecture, tr-type G spans 8 to 288 (EDYRNFGIMA…AVVEYLPSPA (281 aa)). Residues 17 to 24 (AHIDAGKT), 86 to 90 (DTPGH), and 140 to 143 (NKMD) each bind GTP.

It belongs to the TRAFAC class translation factor GTPase superfamily. Classic translation factor GTPase family. EF-G/EF-2 subfamily.

The protein localises to the cytoplasm. Catalyzes the GTP-dependent ribosomal translocation step during translation elongation. During this step, the ribosome changes from the pre-translocational (PRE) to the post-translocational (POST) state as the newly formed A-site-bound peptidyl-tRNA and P-site-bound deacylated tRNA move to the P and E sites, respectively. Catalyzes the coordinated movement of the two tRNA molecules, the mRNA and conformational changes in the ribosome. The polypeptide is Elongation factor G (Mesorhizobium japonicum (strain LMG 29417 / CECT 9101 / MAFF 303099) (Mesorhizobium loti (strain MAFF 303099))).